The primary structure comprises 358 residues: Putative cell-type specific agglutination protein pfl7 (358 aa).

The signal sequence occupies residues 1-23; the sequence is MNSLKSLCLKCIVTLCLLVNAFA. N-linked (GlcNAc...) asparagine glycosylation is found at asparagine 67, asparagine 88, asparagine 112, and asparagine 136. Positions 90–144 are disordered; that stretch reads TISTSSSTPITASVPTSSSILSNSTIPTTSPVPTTSSTPTSSSILSNSTIPSSSS. 2 tandem repeats follow at residues 148–180 and 181–218. The 2 X 36 AA approximate tandem repeats stretch occupies residues 148–218; the sequence is STITTTIISG…GLVEVITPSC (71 aa). The 152-residue stretch at 207–358 folds into the DIPSY domain; it reads QSGLVEVITP…RADDVILVAY (152 aa). N-linked (GlcNAc...) asparagine glycans are attached at residues asparagine 245 and asparagine 305.

Belongs to the mam3/map4 family.

It localises to the cell surface. May be involved in agglutination during conjugation or other aspects of colony formation. Induces flocculation when overexpressed. This is Putative cell-type specific agglutination protein pfl7 from Schizosaccharomyces pombe (strain 972 / ATCC 24843) (Fission yeast).